A 70-amino-acid polypeptide reads, in one-letter code: uncharacterized protein (70 aa).

This is an uncharacterized protein from Swinepox virus (strain Kasza) (SWPV).